A 538-amino-acid polypeptide reads, in one-letter code: Adenine deaminase (538 aa).

This sequence belongs to the metallo-dependent hydrolases superfamily. Adenine deaminase family. Mn(2+) serves as cofactor.

It catalyses the reaction adenine + H2O + H(+) = hypoxanthine + NH4(+). The polypeptide is Adenine deaminase (Methanothermobacter thermautotrophicus (strain ATCC 29096 / DSM 1053 / JCM 10044 / NBRC 100330 / Delta H) (Methanobacterium thermoautotrophicum)).